The following is a 491-amino-acid chain: ADP-specific phosphofructokinase (491 aa).

Positions 4-486 constitute an ADPK domain; that stretch reads EEWEQRHAEA…FVAMLAKIKQ (483 aa). Positions 281, 312, and 470 each coordinate Mg(2+). Aspartate 470 acts as the Proton acceptor in catalysis.

It belongs to the carbohydrate kinase PfkC family. Requires Mg(2+) as cofactor.

Its subcellular location is the cytoplasm. It catalyses the reaction beta-D-fructose 6-phosphate + ADP = beta-D-fructose 1,6-bisphosphate + AMP + H(+). Its pathway is carbohydrate degradation; glycolysis. In terms of biological role, catalyzes the phosphorylation of fructose 6-phosphate to fructose 1,6-bisphosphate using ADP as the phosphate donor. This Methanosarcina acetivorans (strain ATCC 35395 / DSM 2834 / JCM 12185 / C2A) protein is ADP-specific phosphofructokinase.